A 190-amino-acid polypeptide reads, in one-letter code: B3 domain-containing protein Os02g0764100 (190 aa).

A DNA-binding region (TF-B3) is located at residues 17 to 121; the sequence is FEKAVTPSDV…KLLFIDCKKN (105 aa).

The protein resides in the nucleus. This Oryza sativa subsp. japonica (Rice) protein is B3 domain-containing protein Os02g0764100.